Consider the following 275-residue polypeptide: Nuclear egress protein 2 (275 aa).

At 1-251 (MDSYNYRDFA…SERVKRRPVR (251 aa)) the chain is on the perinuclear space side. The segment at 197 to 221 (CDRSNGIVSPREHRECRERQKRRPT) is disordered. Residues 252 to 272 (IAAAILAFVFVAVILAIATKG) traverse the membrane as a helical segment. The Nuclear portion of the chain corresponds to 273 to 275 (RLF).

It belongs to the herpesviridae NEC2 protein family. Forms a heterohexameric complex with NEC1. In terms of processing, phosphorylated.

The protein localises to the host nucleus inner membrane. Its function is as follows. Plays an essential role in virion nuclear egress, the first step of virion release from infected cell. Within the host nucleus, NEC1 interacts with the newly formed capsid through the vertexes and directs it to the inner nuclear membrane by associating with NEC2. Induces the budding of the capsid at the inner nuclear membrane as well as its envelopment into the perinuclear space. There, the NEC1/NEC2 complex promotes the fusion of the enveloped capsid with the outer nuclear membrane and the subsequent release of the viral capsid into the cytoplasm where it will reach the secondary budding sites in the host Golgi or trans-Golgi network. The protein is Nuclear egress protein 2 of Equus caballus (Horse).